We begin with the raw amino-acid sequence, 2559 residues long: Nonribosomal peptide synthetase asqK (2559 aa).

The segment at 90 to 474 (YRPSHTAIHA…SRKDSQVKIR (385 aa)) is adenylation 1. Positions 593–669 (TNIEQLVHEL…SLVHYPAGLE (77 aa)) constitute a Carrier 1 domain. Ser-627 is modified (O-(pantetheine 4'-phosphoryl)serine). The interval 695 to 989 (TVEQSFSQAR…GNVQCIRTKV (295 aa)) is condensation 1. The adenylation 2 stretch occupies residues 1155–1562 (FDEQVRAQTD…GRMDQQVKVR (408 aa)). The interval 1681–1776 (LEIGTGSGMI…NTIKDLVRQG (96 aa)) is methyltransferase. In terms of domain architecture, Carrier 2 spans 2090 to 2164 (AFTSEIERAV…GLAQHLQGLG (75 aa)). Ser-2124 is modified (O-(pantetheine 4'-phosphoryl)serine). Residues 2261 to 2409 (FDGVSLSAIL…VNRCLLRVKV (149 aa)) are condensation 2.

It belongs to the NRP synthetase family.

The catalysed reaction is O-methyl-L-tyrosine + anthranilate + S-adenosyl-L-methionine + 2 ATP = (-)-4'-methoxycyclopeptine + 2 AMP + S-adenosyl-L-homocysteine + 2 diphosphate + 2 H(+). It carries out the reaction anthranilate + L-phenylalanine + S-adenosyl-L-methionine + 2 ATP = cyclopeptine + 2 AMP + S-adenosyl-L-homocysteine + 2 diphosphate + 2 H(+). It participates in secondary metabolite biosynthesis. Its pathway is alkaloid biosynthesis. It functions in the pathway mycotoxin biosynthesis. In terms of biological role, nonribosomal peptide synthetase; part of the gene cluster that mediates the biosynthesis of the aspoquinolone mycotoxins. The first stage is catalyzed by the nonribosomal peptide synthetase asqK that condenses anthranilic acid and O-methyl-L-tyrosine to produce 4'-methoxycyclopeptin. AsqK is also able to use anthranilic acid and L-phenylalanine as substrates to produce cyclopeptin, but at a tenfold lower rate. Within the pathway, 4'-methoxycyclopeptin is then converted to 4'-methoxydehydrocyclopeptin by the ketoglutarate-dependent dioxygenase asqJ. AsqJ also converts its first product 4'-methoxydehydrocyclopeptin to 4'-methoxycyclopenin. The following conversion of 4'-methoxycyclopenin into 4'-methoxyviridicatin is catalyzed by the cyclopenase asqI. 4'-methoxyviridicatin is the precursor of quinolone natural products, and is further converted to quinolinone B. The prenyltransferase asqH1 then catalyzes the canonical Friedel-Crafts alkylation of quinolinone B with dimethylallyl cation to yield dimethylallyl quinolone, which is subjected to FAD-dependent dehydrogenation by the FAD-linked oxidoreductase asqF to yield conjugated aryl diene. The delta(3') double bond then serves as the site of the second alkylation with DMAPP catalyzed by the prenyltransferase asqH2 to yield a carbenium ion intermediate, which can be attacked by H(2)O to yield a styrenyl quinolone containing a C3'-hydroxyprenyl chain. The FAD-dependent monooxygenase asqG performs epoxidation of the terminal C7'-C8' olefin. Finally, after dehydratation of the epoxide at C3 by asqC, the quinolone epoxide rearrangement protein asqO catalyzes an enzymatic 3-exo-tet cyclization to yield the cyclopropyl-THF ring system in aspoquinolone. This chain is Nonribosomal peptide synthetase asqK, found in Emericella nidulans (strain FGSC A4 / ATCC 38163 / CBS 112.46 / NRRL 194 / M139) (Aspergillus nidulans).